A 213-amino-acid chain; its full sequence is Imidazole glycerol phosphate synthase subunit HisH (213 aa).

The 208-residue stretch at 4-211 (NIGLIDYGMG…LAWLKKETKD (208 aa)) folds into the Glutamine amidotransferase type-1 domain. Cys-82 serves as the catalytic Nucleophile. Residues His-186 and Glu-188 contribute to the active site.

As to quaternary structure, heterodimer of HisH and HisF.

It localises to the cytoplasm. The enzyme catalyses 5-[(5-phospho-1-deoxy-D-ribulos-1-ylimino)methylamino]-1-(5-phospho-beta-D-ribosyl)imidazole-4-carboxamide + L-glutamine = D-erythro-1-(imidazol-4-yl)glycerol 3-phosphate + 5-amino-1-(5-phospho-beta-D-ribosyl)imidazole-4-carboxamide + L-glutamate + H(+). It catalyses the reaction L-glutamine + H2O = L-glutamate + NH4(+). It participates in amino-acid biosynthesis; L-histidine biosynthesis; L-histidine from 5-phospho-alpha-D-ribose 1-diphosphate: step 5/9. In terms of biological role, IGPS catalyzes the conversion of PRFAR and glutamine to IGP, AICAR and glutamate. The HisH subunit catalyzes the hydrolysis of glutamine to glutamate and ammonia as part of the synthesis of IGP and AICAR. The resulting ammonia molecule is channeled to the active site of HisF. The sequence is that of Imidazole glycerol phosphate synthase subunit HisH from Prochlorococcus marinus (strain SARG / CCMP1375 / SS120).